A 766-amino-acid chain; its full sequence is 5-methyltetrahydropteroyltriglutamate--homocysteine methyltransferase (766 aa).

Residues 16–19 (RELK) and lysine 122 each bind 5-methyltetrahydropteroyltri-L-glutamate. L-homocysteine-binding positions include 443-445 (IGS) and glutamate 496. L-methionine-binding positions include 443-445 (IGS) and glutamate 496. 5-methyltetrahydropteroyltri-L-glutamate contacts are provided by residues 527–528 (RC) and tryptophan 573. Aspartate 611 lines the L-homocysteine pocket. L-methionine is bound at residue aspartate 611. Residue glutamate 617 participates in 5-methyltetrahydropteroyltri-L-glutamate binding. Zn(2+)-binding residues include histidine 653, cysteine 655, and glutamate 677. Histidine 706 acts as the Proton donor in catalysis. Position 738 (cysteine 738) interacts with Zn(2+).

It belongs to the vitamin-B12 independent methionine synthase family. The cofactor is Zn(2+).

The enzyme catalyses 5-methyltetrahydropteroyltri-L-glutamate + L-homocysteine = tetrahydropteroyltri-L-glutamate + L-methionine. Its pathway is amino-acid biosynthesis; L-methionine biosynthesis via de novo pathway; L-methionine from L-homocysteine (MetE route): step 1/1. In terms of biological role, catalyzes the transfer of a methyl group from 5-methyltetrahydrofolate to homocysteine resulting in methionine formation. The sequence is that of 5-methyltetrahydropteroyltriglutamate--homocysteine methyltransferase from Pseudomonas putida (strain W619).